The primary structure comprises 75 residues: Small ribosomal subunit protein bS18 (75 aa).

The protein belongs to the bacterial ribosomal protein bS18 family. As to quaternary structure, part of the 30S ribosomal subunit. Forms a tight heterodimer with protein bS6.

Functionally, binds as a heterodimer with protein bS6 to the central domain of the 16S rRNA, where it helps stabilize the platform of the 30S subunit. This chain is Small ribosomal subunit protein bS18, found in Dinoroseobacter shibae (strain DSM 16493 / NCIMB 14021 / DFL 12).